The following is a 545-amino-acid chain: Cryptochrome-1 (545 aa).

One can recognise a Photolyase/cryptochrome alpha/beta domain in the interval 3-140 (INNILWFRHG…RCVENVSHTL (138 aa)). FAD-binding positions include arginine 237, serine 265, serine 267, glutamine 308, histidine 375, 407-409 (DAD), cysteine 413, and asparagine 416.

It belongs to the DNA photolyase class-1 family. Interacts with tim and per; promoted by light conditions. FAD is required as a cofactor.

The protein localises to the cytoplasm. The protein resides in the perinuclear region. Its subcellular location is the nucleus. Blue light-dependent regulator that is the input of the circadian feedback loop. Has no photolyase activity for cyclobutane pyrimidine dimers or 6-4 photoproducts. Regulation of expression by light suggests a role in photoreception for locomotor activity rhythms. Functions, together with per, as a transcriptional repressor required for the oscillation of peripheral circadian clocks and for the correct specification of clock cells. Genes directly activated by the transcription factors Clock (Clk) and cycle (cyc) are repressed by cry. This Anopheles gambiae (African malaria mosquito) protein is Cryptochrome-1.